We begin with the raw amino-acid sequence, 482 residues long: MHSFRLAAAVLPLLLSSCMLGPDHAPPETPLPEKFSEGAKQSAGDVAVSAWWDSFSDRTLNQYVASGLDENLSVQQALERVNAAAADVTIAGAGGLPKASHTTSGEIGKGGDITSTQNISSVQLSLTWLLDVFGQYRRSTESALASLDSAHAAVDAAKLALIKDLVSSYIDARYYQQRVSISRANLKSRQETYDFTNLQVEAGAASRQDVLQAEGLVRSTIAEIPRLELNFRVSAHHIAALLALPSETVIKQLQKSEGQPVYRGKINAGIPADLIRNRFDIRQAERDLAAATAQIGVAEAQLYPAITLSGSITPSYIKQRGRHGGILKWSFGPSLDLPILDGGRLRANVETSKSDAAAAYISWKLTVLTAVQEVEDALTAVRRDVHTENSRRRQVETIEEALKLSTASYTDGASSLLDVLEAQRQVSSAQASLAAAIQQLAKDHVRLNVAIRGGFAAPKVASPREASTVAAANANIQSAHSP.

A signal peptide spans 1–17 (MHSFRLAAAVLPLLLSS). Residue cysteine 18 is the site of N-palmitoyl cysteine attachment. Cysteine 18 carries S-diacylglycerol cysteine lipidation.

This sequence belongs to the outer membrane factor (OMF) (TC 1.B.17) family.

Its subcellular location is the cell membrane. This chain is Nodulation protein T (nodT), found in Rhizobium leguminosarum bv. viciae.